The following is a 526-amino-acid chain: MWSKRDEQKTYPPIRLNPFVFWSSAISISIFGMLFVLFPETSQHGLTWIQQQVNQLFGWYYMLVIILSLGFVAWLAFSQVGNIPLGKAQDKPEFGYLVWTSMLFSAGIGIALLYYGVAEPVDHFLRPPEGQGGTVEAAQNAMMYSFLHWGIHGWVLYALVGVTLGYFAFRRDLPLALRSALYPIFGERIHGLVGHMVDGFGILATIISLVTNLGIGALVMISGISYLFPDLPNTSSTLVVTVIMMMLVATLTTVIGIEKGLAWLSRINLRLLYLLLLFVFLTGPTNHLLNGLVQNTGDYLSHFVQKSFDLYLYDKNATGWLASWTIFYWAWWIAWAPFVGMFIARISKGRTIREVVLGVCLIPLGFTLAWISIFGNTAIDLILNHGQQIIGSLVIQDPALSLFKLLEYLPFHPYVAGIVVVICFVLFLTPVGSGTLMIANLSSQGGSSDSDSPIWLRVFWSIAITIVSIGLLLAGSFSAMQSAVVLCGLPFSVILLLYMFGLAKALKQETQQPVVESHTTETSGSD.

Residues 1 to 17 (MWSKRDEQKTYPPIRLN) are Cytoplasmic-facing. Residues 18 to 38 (PFVFWSSAISISIFGMLFVLF) form a helical membrane-spanning segment. At 39 to 56 (PETSQHGLTWIQQQVNQL) the chain is on the periplasmic side. The chain crosses the membrane as a helical span at residues 57 to 77 (FGWYYMLVIILSLGFVAWLAF). The Cytoplasmic portion of the chain corresponds to 78 to 93 (SQVGNIPLGKAQDKPE). Residues 94–114 (FGYLVWTSMLFSAGIGIALLY) traverse the membrane as a helical segment. Over 115-148 (YGVAEPVDHFLRPPEGQGGTVEAAQNAMMYSFLH) the chain is Periplasmic. Residues 149 to 169 (WGIHGWVLYALVGVTLGYFAF) traverse the membrane as a helical segment. Residues 170 to 200 (RRDLPLALRSALYPIFGERIHGLVGHMVDGF) are Cytoplasmic-facing. Residues 201 to 221 (GILATIISLVTNLGIGALVMI) traverse the membrane as a helical segment. Residues 222 to 236 (SGISYLFPDLPNTSS) lie on the Periplasmic side of the membrane. Residues 237–257 (TLVVTVIMMMLVATLTTVIGI) traverse the membrane as a helical segment. Topologically, residues 258-272 (EKGLAWLSRINLRLL) are cytoplasmic. A helical membrane pass occupies residues 273–293 (YLLLLFVFLTGPTNHLLNGLV). The Periplasmic portion of the chain corresponds to 294-323 (QNTGDYLSHFVQKSFDLYLYDKNATGWLAS). A helical transmembrane segment spans residues 324 to 344 (WTIFYWAWWIAWAPFVGMFIA). At 345 to 354 (RISKGRTIRE) the chain is on the cytoplasmic side. Residues 355 to 375 (VVLGVCLIPLGFTLAWISIFG) form a helical membrane-spanning segment. Over 376–417 (NTAIDLILNHGQQIIGSLVIQDPALSLFKLLEYLPFHPYVAG) the chain is Periplasmic. Residues 418 to 438 (IVVVICFVLFLTPVGSGTLMI) form a helical membrane-spanning segment. At 439–457 (ANLSSQGGSSDSDSPIWLR) the chain is on the cytoplasmic side. The helical transmembrane segment at 458-478 (VFWSIAITIVSIGLLLAGSFS) threads the bilayer. Topologically, residues 479–482 (AMQS) are periplasmic. A helical membrane pass occupies residues 483–503 (AVVLCGLPFSVILLLYMFGLA). The Cytoplasmic portion of the chain corresponds to 504 to 526 (KALKQETQQPVVESHTTETSGSD).

The protein belongs to the BCCT transporter (TC 2.A.15) family.

Its subcellular location is the cell inner membrane. Its function is as follows. Sodium-independent high-affinity choline uptake system. Uptake is not proton coupled. May play a role in metabolic adaptation to choline-containing environments. In Acinetobacter baylyi (strain ATCC 33305 / BD413 / ADP1), this protein is Osmo-independent choline transporter BetT1.